Here is a 236-residue protein sequence, read N- to C-terminus: Small ribosomal subunit protein uS3 (236 aa).

The region spanning 39–112 (IREFITKHPK…RINLKVEEVG (74 aa)) is the KH type-2 domain. A disordered region spans residues 212–236 (YGDDNDGADAQTGQASKKPKRSYKR).

Belongs to the universal ribosomal protein uS3 family. In terms of assembly, part of the 30S ribosomal subunit. Forms a tight complex with proteins S10 and S14.

Its function is as follows. Binds the lower part of the 30S subunit head. Binds mRNA in the 70S ribosome, positioning it for translation. This Rhodopirellula baltica (strain DSM 10527 / NCIMB 13988 / SH1) protein is Small ribosomal subunit protein uS3.